The primary structure comprises 928 residues: MNEAMATDSPRRPSRCTGGVVVRPQAVTEQSYMESVVTFLQDVVPQAYSGTPLTEEKEKIVWVRFENADLNDTSRNLEFHEIHSTGNEPPLLIMIGYSDGMQVWSIPISGEAQELFSVRHGPIRAARILPAPQFGAQKCDNFAEKRPLLGVCKSIGSSGTSPPYCCVDLYSLRTGEMVKSIQFKTPIYDLHCNKRILVVVLQEKIAAFDSCTFTKKFFVTSCYPCPGPNMNPIALGSRWLAYAENKLIRCHQSRGGACGDNIQSYTATVISAAKTLKSGLTMVGKVVTQLTGTLPSGVTEDDVAIHSNSRRSPLVPGIITVIDTETVGEGQVLVSEDSDSDGIVAHFPAHEKPVCCMAFNTSGMLLVTTDTLGHDFHVFQILTHPWSSSQCAVHHLYTLHRGETEAKVQDICFSHDCRWVVVSTLRGTSHVFPINPYGGQPCVRTHMSPRVVNRMSRFQKSAGLEEIEQELTSKQGGRCSPVPGLSSSPSGSPLHGKLNSQDSYNNFTNNNPGNPRLSPLPSLMVVMPLAQIKQPMTLGTITKRTGPYLFGAGCFSIKAPCKVKPPPQISPSKSMGGEFCVAAIFGTSRSWFANNAGLKREKDQSKQVVVESLYIISCYGTLVEHMMEPRPLSTAPKISDDTPLEMMTSPRASWTLVRTPQWNELQPPFNANHPLLLAADAVQYYQFLLAGLVPPGSPGPITRHGSYDSLASDHSGQEDEEWLSQVEIVTHTGPHRRLWMGPQFQFKTIHPSGQTTVISSSSSVLQSHGPSDTPQPLLDFDTDDLDLNSLRIQPVRSDPVSMPGSSRPVSDRRGVSTVIDAASGTFDRSVTLLEVCGSWPEGFGLRHMSSMEHTEEGLRERLADAMAESPSRDVVGSGTELQREGSIETLSNSSGSTSGSIPRNFDGYRSPLPTNESQPLSLFPTGFP.

M1 carries the post-translational modification N-acetylmethionine. A WD repeat occupies 69–114 (DLNDTSRNLEFHEIHSTGNEPPLLIMIGYSDGMQVWSIPISGEAQE). Residue K215 forms a Glycyl lysine isopeptide (Lys-Gly) (interchain with G-Cter in SUMO1); alternate linkage. Residue K215 forms a Glycyl lysine isopeptide (Lys-Gly) (interchain with G-Cter in SUMO2); alternate linkage. Required for recruitment to preautophagosomal structure in response to mitophagy stretches follow at residues 254–312 (RGGA…SRRS) and 437–560 (YGGQ…IKAP). S461, S480, and S488 each carry phosphoserine. 2 disordered regions span residues 472–515 (TSKQ…PGNP) and 755–777 (TTVI…PQPL). Low complexity-rich tracts occupy residues 480–494 (SPVP…GSPL), 505–514 (NNFTNNNPGN), and 755–771 (TTVI…HGPS). Phosphoserine is present on residues S838, S886, and S898. The segment at 868-928 (ESPSRDVVGS…PLSLFPTGFP (61 aa)) is disordered. Residues 887 to 901 (IETLSNSSGSTSGSI) show a composition bias toward low complexity.

The protein belongs to the BCAS3 family. In terms of assembly, interacts with histone H3, ESR1, KAT2B and PELP1; the interactions occur in a estrogen-dependent manner. Interacts with beta-tubulin and VIM. Interacts (via C-terminal) with PHAF1; the interaction is requrired for the association with the phagophore. In terms of tissue distribution, expressed in stomach, liver, lung, kidney, prostate, testis, thyroid gland, adrenal gland, brain, heart, skeletal muscle, colon, spleen, small intestine, placenta, blood leukocyte and mammary epithelial cells. Expressed in undifferentiated ES cells. Expressed in blood islands and nascent blood vessels derived from differentiated ES cells into embryoid bodies (BD). Expressed in endothelial cells. Not detected in brain. Expressed in brain tumors (at protein level). Expressed in brain. Highly expressed in breast cancers and in glioma cell lines.

The protein localises to the nucleus. It localises to the cytoplasm. Its subcellular location is the cytoskeleton. It is found in the preautophagosomal structure. Plays a role in angiogenesis. Participates in the regulation of cell polarity and directional endothelial cell migration by mediating both the activation and recruitment of CDC42 and the reorganization of the actin cytoskeleton at the cell leading edge. Promotes filipodia formation. Functions synergistically with PELP1 as a transcriptional coactivator of estrogen receptor-responsive genes. Stimulates histone acetyltransferase activity. Binds to chromatin. Plays a regulatory role in autophagic activity. In complex with PHAF1, associates with the preautophagosomal structure during both non-selective and selective autophagy. Probably binds phosphatidylinositol 3-phosphate (PtdIns3P) which would mediate the recruitment preautophagosomal structures. The protein is BCAS3 microtubule associated cell migration factor of Homo sapiens (Human).